The primary structure comprises 444 residues: Platelet-activating factor acetylhydrolase (444 aa).

Positions 1 to 21 (MLPPKLHALFCLCSCLTLVHP) are cleaved as a signal peptide. N-linked (GlcNAc...) asparagine glycans are attached at residues asparagine 60 and asparagine 200. Catalysis depends on serine 274, which acts as the Nucleophile. Catalysis depends on charge relay system residues aspartate 297 and histidine 352. N-linked (GlcNAc...) asparagine glycosylation is present at asparagine 424.

This sequence belongs to the AB hydrolase superfamily. Lipase family. In terms of processing, N-glycosylated. As to expression, plasma.

It is found in the secreted. The protein localises to the extracellular space. It carries out the reaction a 1-O-alkyl-2-acetyl-sn-glycero-3-phosphocholine + H2O = a 1-O-alkyl-sn-glycero-3-phosphocholine + acetate + H(+). The enzyme catalyses 1-O-decyl-2-acetyl-sn-glycero-3-phosphocholine + H2O = 1-O-decyl-sn-glycero-3-phosphocholine + acetate + H(+). The catalysed reaction is 1-O-dodecyl-2-acetyl-sn-glycero-3-phosphocholine + H2O = 1-O-dodecyl-sn-glycero-3-phosphocholine + acetate + H(+). It catalyses the reaction 1-O-tetradecyl-2-acetyl-sn-glycero-3-phosphocholine + H2O = 1-O-tetradecyl-sn-glycero-3-phosphocholine + acetate + H(+). It carries out the reaction 1-O-hexadecyl-2-acetyl-sn-glycero-3-phosphocholine + H2O = 1-O-hexadecyl-sn-glycero-3-phosphocholine + acetate + H(+). The enzyme catalyses 1-O-octadecyl-2-acetyl-sn-glycero-3-phosphocholine + H2O = 1-O-octadecyl-sn-glycero-3-phosphocholine + acetate + H(+). The catalysed reaction is 1-hexadecanoyl-2-acetyl-sn-glycero-3-phosphocholine + H2O = 1-hexadecanoyl-sn-glycero-3-phosphocholine + acetate + H(+). It catalyses the reaction 1-hexadecanoyl-2-propionyl-sn-glycero-3-phosphocholine + H2O = propanoate + 1-hexadecanoyl-sn-glycero-3-phosphocholine + H(+). It carries out the reaction 1-hexadecanoyl-2-butanoyl-sn-glycero-3-phosphocholine + H2O = butanoate + 1-hexadecanoyl-sn-glycero-3-phosphocholine + H(+). The enzyme catalyses 1-hexadecanoyl-2-pentanoyl-sn-glycero-3-phosphocholine + H2O = pentanoate + 1-hexadecanoyl-sn-glycero-3-phosphocholine + H(+). The catalysed reaction is 1-hexadecanoyl-2-glutaroyl-sn-glycero-3-phosphocholine + H2O = glutarate + 1-hexadecanoyl-sn-glycero-3-phosphocholine + H(+). It catalyses the reaction 1-hexadecanoyl-2-(5-oxopentanoyl)-sn-glycero-3-phosphocholine + H2O = 5-oxopentanoate + 1-hexadecanoyl-sn-glycero-3-phosphocholine + H(+). It carries out the reaction 1-hexadecanoyl-2-(9-oxononanoyl)-sn-glycero-3-phosphocholine + H2O = 9-oxononanoate + 1-hexadecanoyl-sn-glycero-3-phosphocholine + H(+). The enzyme catalyses 1-hexadecanoyl-2-[9-hydroperoxy-(10E-octadecenoyl)]-sn-glycero-3-phosphocholine + H2O = 9-hydroperoxy-10E-octadecenoate + 1-hexadecanoyl-sn-glycero-3-phosphocholine + H(+). The catalysed reaction is 1-hexadecanoyl-2-(10-hydroperoxy-8E-octadecenoyl)-sn-glycero-3-phosphocholine + H2O = 10-hydroperoxy-(8E)-octadecenoate + 1-hexadecanoyl-sn-glycero-3-phosphocholine + H(+). Functionally, lipoprotein-associated calcium-independent phospholipase A2 involved in phospholipid catabolism during inflammatory and oxidative stress response. At the lipid-aqueous interface, hydrolyzes the ester bond of fatty acyl group attached at sn-2 position of phospholipids (phospholipase A2 activity). Specifically targets phospholipids with a short-chain fatty acyl group at sn-2 position. Can hydrolyze phospholipids with long fatty acyl chains, only if they carry oxidized functional groups. Hydrolyzes and inactivates platelet-activating factor (PAF, 1-O-alkyl-2-acetyl-sn-glycero-3-phosphocholine), a potent pro-inflammatory signaling lipid that acts through PTAFR on various innate immune cells. Hydrolyzes oxidatively truncated phospholipids carrying an aldehyde group at omega position, preventing their accumulation in low-density lipoprotein (LDL) particles and uncontrolled pro-inflammatory effects. As part of high-density lipoprotein (HDL) particles, can hydrolyze phospholipids having long-chain fatty acyl hydroperoxides at sn-2 position and protect against potential accumulation of these oxylipins in the vascular wall. Catalyzes the release from membrane phospholipids of F2-isoprostanes, lipid biomarkers of cellular oxidative damage. The polypeptide is Platelet-activating factor acetylhydrolase (PLA2G7) (Canis lupus familiaris (Dog)).